We begin with the raw amino-acid sequence, 479 residues long: Putative F-box/LRR-repeat protein At1g56400 (479 aa).

Residues 12–60 form the F-box domain; it reads QDRLSNLPDVLLIMIISCLSFKECIRTSVLAKRWRYLCRETRNISFKET. 7 LRR repeats span residues 99 to 129, 139 to 167, 186 to 211, 228 to 254, 287 to 312, 342 to 367, and 419 to 446; these read YFSI…VLDF, CASR…KIYS, IGWI…SINY, VFES…KYSG, RTKL…SVCP, LHVM…TFDI, and LKFL…ELYM.

The protein is Putative F-box/LRR-repeat protein At1g56400 of Arabidopsis thaliana (Mouse-ear cress).